A 460-amino-acid polypeptide reads, in one-letter code: Exodeoxyribonuclease 7 large subunit (460 aa).

Belongs to the XseA family. As to quaternary structure, heterooligomer composed of large and small subunits.

It localises to the cytoplasm. It catalyses the reaction Exonucleolytic cleavage in either 5'- to 3'- or 3'- to 5'-direction to yield nucleoside 5'-phosphates.. In terms of biological role, bidirectionally degrades single-stranded DNA into large acid-insoluble oligonucleotides, which are then degraded further into small acid-soluble oligonucleotides. This is Exodeoxyribonuclease 7 large subunit from Edwardsiella ictaluri (strain 93-146).